The following is a 169-amino-acid chain: Probable GPI-anchored adhesin-like protein PGA22 (169 aa).

Residues 1–18 (MKYSTLAWLVIASYTVFA) form the signal peptide. N87, N104, N111, and N118 each carry an N-linked (GlcNAc...) asparagine glycan. G140 is lipidated: GPI-anchor amidated glycine. The propeptide at 141 to 169 (PALTTTTVAEAFSLAAGASLGYLVALLFL) is removed in mature form.

It is found in the cell membrane. In terms of biological role, putative adhesin which may be involved in cell adhesion and virulence. In Candida albicans (strain SC5314 / ATCC MYA-2876) (Yeast), this protein is Probable GPI-anchored adhesin-like protein PGA22 (PGA22).